The sequence spans 552 residues: Urocanate hydratase (552 aa).

NAD(+)-binding positions include 49–50 (GG), glutamine 127, 173–175 (GMG), glutamate 193, arginine 198, 239–240 (NA), 260–264 (QTSAH), 270–271 (YI), and tyrosine 319. Cysteine 407 is a catalytic residue. Glycine 489 contributes to the NAD(+) binding site.

It belongs to the urocanase family. The cofactor is NAD(+).

It localises to the cytoplasm. It catalyses the reaction 4-imidazolone-5-propanoate = trans-urocanate + H2O. It participates in amino-acid degradation; L-histidine degradation into L-glutamate; N-formimidoyl-L-glutamate from L-histidine: step 2/3. Its function is as follows. Catalyzes the conversion of urocanate to 4-imidazolone-5-propionate. The chain is Urocanate hydratase from Geobacillus sp. (strain WCH70).